An 860-amino-acid chain; its full sequence is Tetratricopeptide repeat protein 13 (860 aa).

TPR repeat units lie at residues 143–176, 216–248, 249–282, 284–316, 317–350, 352–384, and 386–418; these read TNEE…EPDL, PEVF…LQPS, ARLY…NKNQ, IAML…KVDF, IDAY…NQNH, QTLQ…EPYN, and VCQY…DPLP.

The polypeptide is Tetratricopeptide repeat protein 13 (TTC13) (Homo sapiens (Human)).